A 316-amino-acid polypeptide reads, in one-letter code: Probable cell division protein WhiA (316 aa).

A DNA-binding region (H-T-H motif) is located at residues 275 to 309 (TLKELGEMVESGKISKSGINHRLRKLDQIAEQLRN).

This sequence belongs to the WhiA family.

Functionally, involved in cell division and chromosome segregation. This chain is Probable cell division protein WhiA, found in Bacillus pumilus (strain SAFR-032).